We begin with the raw amino-acid sequence, 242 residues long: C-reactive protein 3.3 (242 aa).

The first 24 residues, 1–24 (MKTFHGPTCGTAVSLCLLLFLTSA), serve as a signal peptide directing secretion. Residues 30 to 241 (ITSKVKFPPS…GVVLSPNEIC (212 aa)) form the Pentraxin (PTX) domain. Phosphocholine is bound by residues threonine 60 and tyrosine 63. 2 disulfides stabilise this stretch: cysteine 62-cysteine 125 and cysteine 112-cysteine 144. Aspartate 85 and asparagine 86 together coordinate Ca(2+). Asparagine 147 carries N-linked (GlcNAc...) asparagine glycosylation. Glutamine 169, aspartate 170, and glutamine 180 together coordinate Ca(2+). A disulfide bridge links cysteine 207 with cysteine 241.

It belongs to the pentraxin family. In terms of assembly, homopentamer. Pentraxin (or pentaxin) have a discoid arrangement of 5 non-covalently bound subunits. It depends on Ca(2+) as a cofactor.

The protein resides in the secreted. Its function is as follows. Might serve the role of immunoglobulins. This Limulus polyphemus (Atlantic horseshoe crab) protein is C-reactive protein 3.3.